The primary structure comprises 202 residues: Peptide deformylase (202 aa).

The disordered stretch occupies residues 1 to 24; sequence MAGSFAQLAKNAEKKKPSISVSKE. Fe cation is bound by residues C121 and H163. Residue E164 is part of the active site. H167 is a binding site for Fe cation.

The protein belongs to the polypeptide deformylase family. Fe(2+) is required as a cofactor.

The enzyme catalyses N-terminal N-formyl-L-methionyl-[peptide] + H2O = N-terminal L-methionyl-[peptide] + formate. Its function is as follows. Removes the formyl group from the N-terminal Met of newly synthesized proteins. Requires at least a dipeptide for an efficient rate of reaction. N-terminal L-methionine is a prerequisite for activity but the enzyme has broad specificity at other positions. This Prochlorococcus marinus (strain NATL2A) protein is Peptide deformylase.